We begin with the raw amino-acid sequence, 567 residues long: 2-succinyl-5-enolpyruvyl-6-hydroxy-3-cyclohexene-1-carboxylate synthase (567 aa).

Belongs to the TPP enzyme family. MenD subfamily. In terms of assembly, homodimer. The cofactor is Mg(2+). Mn(2+) serves as cofactor. Thiamine diphosphate is required as a cofactor.

It catalyses the reaction isochorismate + 2-oxoglutarate + H(+) = 5-enolpyruvoyl-6-hydroxy-2-succinyl-cyclohex-3-ene-1-carboxylate + CO2. It participates in quinol/quinone metabolism; 1,4-dihydroxy-2-naphthoate biosynthesis; 1,4-dihydroxy-2-naphthoate from chorismate: step 2/7. Its pathway is quinol/quinone metabolism; menaquinone biosynthesis. Its function is as follows. Catalyzes the thiamine diphosphate-dependent decarboxylation of 2-oxoglutarate and the subsequent addition of the resulting succinic semialdehyde-thiamine pyrophosphate anion to isochorismate to yield 2-succinyl-5-enolpyruvyl-6-hydroxy-3-cyclohexene-1-carboxylate (SEPHCHC). This chain is 2-succinyl-5-enolpyruvyl-6-hydroxy-3-cyclohexene-1-carboxylate synthase, found in Yersinia pseudotuberculosis serotype O:1b (strain IP 31758).